Here is a 496-residue protein sequence, read N- to C-terminus: N-succinylglutamate 5-semialdehyde dehydrogenase (496 aa).

229 to 234 contacts NAD(+); that stretch reads GSYATG. Residues E252 and C286 contribute to the active site.

The protein belongs to the aldehyde dehydrogenase family. AstD subfamily.

The enzyme catalyses N-succinyl-L-glutamate 5-semialdehyde + NAD(+) + H2O = N-succinyl-L-glutamate + NADH + 2 H(+). It functions in the pathway amino-acid degradation; L-arginine degradation via AST pathway; L-glutamate and succinate from L-arginine: step 4/5. Functionally, catalyzes the NAD-dependent reduction of succinylglutamate semialdehyde into succinylglutamate. The chain is N-succinylglutamate 5-semialdehyde dehydrogenase from Legionella pneumophila subsp. pneumophila (strain Philadelphia 1 / ATCC 33152 / DSM 7513).